Here is a 134-residue protein sequence, read N- to C-terminus: Ribosome-binding factor A (134 aa).

Belongs to the RbfA family. Monomer. Binds 30S ribosomal subunits, but not 50S ribosomal subunits or 70S ribosomes.

The protein localises to the cytoplasm. Its function is as follows. One of several proteins that assist in the late maturation steps of the functional core of the 30S ribosomal subunit. Associates with free 30S ribosomal subunits (but not with 30S subunits that are part of 70S ribosomes or polysomes). Required for efficient processing of 16S rRNA. May interact with the 5'-terminal helix region of 16S rRNA. This chain is Ribosome-binding factor A, found in Psychrobacter arcticus (strain DSM 17307 / VKM B-2377 / 273-4).